A 320-amino-acid polypeptide reads, in one-letter code: Probable cell division protein WhiA (320 aa).

A DNA-binding region (H-T-H motif) is located at residues 276–310 (TLKELGEMVESGKVSKSGVNHRLRKIDELAEKLRA).

The protein belongs to the WhiA family.

Involved in cell division and chromosome segregation. This chain is Probable cell division protein WhiA, found in Halalkalibacterium halodurans (strain ATCC BAA-125 / DSM 18197 / FERM 7344 / JCM 9153 / C-125) (Bacillus halodurans).